The following is a 720-amino-acid chain: Iron-sulfur clusters transporter ATM1, mitochondrial (720 aa).

The transit peptide at 1 to 36 (MIMFRSLSVTPVWKAGLSLSHRSIPINSRLSSVRNY) directs the protein to the mitochondrion. The Mitochondrial matrix portion of the chain corresponds to 37 to 129 (ISIGCANKTG…PSGDNKVKIR (93 aa)). Residues 64-77 (RFNSSSNGNGTDKN) are compositionally biased toward polar residues. Residues 64-102 (RFNSSSNGNGTDKNASVAPKTEVKKIVPPKPSTNGKSKT) form a disordered region. A helical transmembrane segment spans residues 130 to 151 (VLIALALLIGAKLLNVQVPFFF). In terms of domain architecture, ABC transmembrane type-1 spans 130–421 (VLIALALLIG…LGSVYRELKQ (292 aa)). Residues 152-175 (KQTIDSMNIEWGPDVATVLPVAIT) lie on the Mitochondrial intermembrane side of the membrane. A helical transmembrane segment spans residues 176-199 (MTILSYGAARFGAVMFGELRNAVF). Over 200–248 (AKVAQNAIRKVSLQTFQHLMKLDLGWHLSRQTGGLTRAMDRGTKGISYV) the chain is Mitochondrial matrix. Residues 249 to 272 (LSAMVFHMIPITFEISVVCGILTY) form a helical membrane-spanning segment. Q273 is a topological domain (mitochondrial intermembrane). The chain crosses the membrane as a helical span at residues 274–294 (FGSSFAAMTFVTMLLYSFFTF). Over 295-360 (KTTAWRTEFR…SQIKVAQSLA (66 aa)) the chain is Mitochondrial matrix. Glutathione contacts are provided by residues 300–304 (RTEFR) and 363–366 (NAGQ). Residues 361-379 (FLNAGQNFIFTSALTAMMY) form a helical membrane-spanning segment. At 380-394 (MGASGVMEGALTVGD) the chain is on the mitochondrial intermembrane side. Residues 395–416 (LVLINQLVFQLSVPLNFLGSVY) form a helical membrane-spanning segment. G413 provides a ligand contact to glutathione. At 417-720 (RELKQSLIDM…EKEPRTSKKD (304 aa)) the chain is on the mitochondrial matrix side. The ABC transporter domain maps to 456–692 (IKFENVTFGY…PNSLYSELWN (237 aa)). ATP is bound by residues Y465 and 489–500 (GPSGSGKSTILR).

The protein belongs to the ABC transporter superfamily. ABCB family. Heavy Metal importer (TC 3.A.1.210) subfamily. In terms of assembly, homodimer.

It localises to the mitochondrion inner membrane. Functionally, performs an essential function in the generation of cytoplasmic iron-sulfur proteins by mediating the ATP-dependent export of Fe/S cluster precursors synthesized by NFS1 and other mitochondrial proteins. Hydrolyzes ATP. Binds glutathione and may function by transporting a glutathione-conjugated iron-sulfur compound. The sequence is that of Iron-sulfur clusters transporter ATM1, mitochondrial from Kluyveromyces lactis (strain ATCC 8585 / CBS 2359 / DSM 70799 / NBRC 1267 / NRRL Y-1140 / WM37) (Yeast).